The following is a 273-amino-acid chain: Nitrogenase iron protein (273 aa).

8–15 (GKGGIGKS) lines the ATP pocket. Cys95 provides a ligand contact to [4Fe-4S] cluster. Arg98 is subject to ADP-ribosylarginine; by dinitrogenase reductase ADP-ribosyltransferase. Cys130 is a [4Fe-4S] cluster binding site.

This sequence belongs to the NifH/BchL/ChlL family. In terms of assembly, homodimer. Requires [4Fe-4S] cluster as cofactor. In terms of processing, the reversible ADP-ribosylation of Arg-98 inactivates the nitrogenase reductase and regulates nitrogenase activity.

The catalysed reaction is N2 + 8 reduced [2Fe-2S]-[ferredoxin] + 16 ATP + 16 H2O = H2 + 8 oxidized [2Fe-2S]-[ferredoxin] + 2 NH4(+) + 16 ADP + 16 phosphate + 6 H(+). The key enzymatic reactions in nitrogen fixation are catalyzed by the nitrogenase complex, which has 2 components: the iron protein and the molybdenum-iron protein. In Roseiflexus castenholzii (strain DSM 13941 / HLO8), this protein is Nitrogenase iron protein.